The chain runs to 1448 residues: MNSLLNNLIIDYEYDLIKVHHHIQKNIFIFPFKKQHYHSTVLECLINLCSKLKYDENENLNSLDQFKIIFYNESKFLNKNLKEYLEILKNSKEINKHVICDYFEKDNNGSEEKNQNSSIVFNFLNCFKDYLSMDIIEFIVRGISFQVRSYCNLIKPIEQWKQKTYQQRYQQFKKALHLNNEVYKRIVCNGVWKSEKLDYIYRYKSDQLSLVGIIESDCSDLFISTLLIDSNSYEQLENVWRLICNFDSFSIASKFLIEFFKLDKVNNKLNFSIHPSSDANENYKRTKTSTNSNLSIDLVRLLEFTTTNFSINVAKLLISKFPTFITSIPSRNSLWGIESRSSLNPIENHFRILNCSFDFNNHQIPIDKQKDYINLFTKNLIHFNTEINEIEDLILKERYHISIRSINNNNHDDDDYDDYDDDDDHHSGCNNNNNNNNDGDHNEDENSIKEESLIEFSNYKVDSMISRLLKYNAPSTTIIALLSNLVCNHMGVSQRILILSTLIEEIQMIESLLVQNDSFKTFMLCESMVSTPNRWSKQSIPLVFFAYIGSDILNLKERPMFYKFFDLNPRLLLSIIPVPLIFKTFLSCSDIIRNNFEDDLINFEDDDSSSVNFFGFTSNFSNSDQDYLSALETCFENSNVFNDQQLKQMARKLLTFSKRENQSRIAESELLEELELEEKRKKQKQQEKIKKRLKREKRLKEKQDLLLIKLEKQKEKQLEEQMKKREKKLQKLERKRLYKKLQDDEKQKLIEKQKQKEKEKELSKQKEKEFELLKQKEIDEIKQKSIQEIDEINKNIQQNQLKIDEINKKLEIKEIQNFQLPLLNQQQQQPPPLQLLKQQQQQPSSSLTIQLESITPILEPKNDNVVLLKSSIETPIDSVKKIQSIIEIQLEEENQKKKEMETIDEYEEININKKQINSNMKWGGIGEPSWISVKKDNKKSKSTITTSTTPTTTTPAKVITSQFKNEQTKKLIIENNKKQNLINDNNNNNNNNNNNNNNNNNNNNNNKLNNIIQDEDFVSIGKFKFNRNESNILGRGSNGTLVFKGLWSDKIPVAIKQMQKAFNPLINKEVEALISLTSKNCSNMIRYIDKEEDKLHVYLGLTLCDGSLQNLVESGKLNDFVISSNKSIIELAKDILFGIQFLHSHDIVHNDLNPRNILTLIGKTSNNNNSSNNSFIISDLGLSKMEVESSYSFTSNIPTGQGGYHPFEVLQSKRMTKSVDIFSLGCILFYLLTNGQHPFGNDKLFRIVNIISNKMNLTPLNSNQLACTLIKSMISKDESIRPTIQNVLNHPLFWNLEKKIQFIDAALNLIKEPSNSSYNSKLTKQLNHCDDNDEPFLNDSWNHLIDVTNLLTPTKGSKITISYQYDKVRDLIRFIRNTIAHHKEIKRAIIQQFQNQQSRPNLEVLEYLSSQDSILLYFESKIPNLIHHIYQQLKQYSLTIDYLFNFYN.

Residues D412–D423 show a composition bias toward acidic residues. The tract at residues D412–N446 is disordered. The span at G428–N437 shows a compositional bias: low complexity. Coiled-coil stretches lie at residues A666 to N817, E887 to K921, and E974 to D1016. The disordered stretch occupies residues N975–L1008. Positions K978–L1008 are enriched in low complexity. The Protein kinase domain maps to R1027–F1293. Residues L1033–L1041 and K1056 each bind ATP. D1151 (proton acceptor) is an active-site residue. Residues L1296 to N1448 form the KEN domain.

It belongs to the protein kinase superfamily. Ser/Thr protein kinase family.

It catalyses the reaction L-seryl-[protein] + ATP = O-phospho-L-seryl-[protein] + ADP + H(+). It carries out the reaction L-threonyl-[protein] + ATP = O-phospho-L-threonyl-[protein] + ADP + H(+). This Dictyostelium discoideum (Social amoeba) protein is Probable serine/threonine-protein kinase irlB (irlB-1).